A 303-amino-acid chain; its full sequence is Diaminopimelate epimerase (303 aa).

Positions 15, 47, and 67 each coordinate substrate. Cysteine 76 acts as the Proton donor in catalysis. Substrate is bound by residues 77–78 (GN), asparagine 163, asparagine 197, and 215–216 (ER). Cysteine 224 (proton acceptor) is an active-site residue. 225–226 (GS) is a substrate binding site. The disordered stretch occupies residues 278-303 (FDPATGEWSRDTQGLQGSGNADRGAA).

Belongs to the diaminopimelate epimerase family. As to quaternary structure, homodimer.

Its subcellular location is the cytoplasm. The enzyme catalyses (2S,6S)-2,6-diaminopimelate = meso-2,6-diaminopimelate. Its pathway is amino-acid biosynthesis; L-lysine biosynthesis via DAP pathway; DL-2,6-diaminopimelate from LL-2,6-diaminopimelate: step 1/1. Catalyzes the stereoinversion of LL-2,6-diaminopimelate (L,L-DAP) to meso-diaminopimelate (meso-DAP), a precursor of L-lysine and an essential component of the bacterial peptidoglycan. In Brucella abortus (strain S19), this protein is Diaminopimelate epimerase.